Consider the following 145-residue polypeptide: Hemoglobin fetal subunit beta (145 aa).

In terms of domain architecture, Globin spans 1 to 145 (MLTAEEKASV…VANALAHRYH (145 aa)). Heme b is bound by residues His-62 and His-91.

This sequence belongs to the globin family. In terms of assembly, heterotetramer of two alpha chains and two beta chains.

In Ovis aries (Sheep), this protein is Hemoglobin fetal subunit beta.